Here is a 451-residue protein sequence, read N- to C-terminus: uncharacterized protein (451 aa).

One can recognise a TRAM domain in the interval 2-60 (NVVLKQRIPLKIKRMGINGEGIGFYKKTLIFVPGALKGEEVFCQISSVRRNFAEAKLLK). 4 residues coordinate [4Fe-4S] cluster: cysteine 73, cysteine 79, cysteine 82, and cysteine 162. Residues glutamine 283, tyrosine 312, aspartate 333, and aspartate 381 each coordinate S-adenosyl-L-methionine. Cysteine 408 serves as the catalytic Nucleophile.

This sequence belongs to the class I-like SAM-binding methyltransferase superfamily. RNA M5U methyltransferase family.

This is an uncharacterized protein from Streptococcus agalactiae serotype III (strain NEM316).